Consider the following 195-residue polypeptide: A-type ATP synthase subunit E (195 aa).

Belongs to the V-ATPase E subunit family. As to quaternary structure, has multiple subunits with at least A(3), B(3), C, D, E, F, H, I and proteolipid K(x).

The protein resides in the cell membrane. Its function is as follows. Component of the A-type ATP synthase that produces ATP from ADP in the presence of a proton gradient across the membrane. The polypeptide is A-type ATP synthase subunit E (Halobacterium salinarum (strain ATCC 29341 / DSM 671 / R1)).